Reading from the N-terminus, the 190-residue chain is Shikimate kinase (190 aa).

Position 22 to 27 (22 to 27) interacts with ATP; it reads GSGKST. Residue Ser26 participates in Mg(2+) binding. Residues Asp44, Arg68, and Gly90 each contribute to the substrate site. Residue Arg127 coordinates ATP. Residue Arg146 participates in substrate binding.

It belongs to the shikimate kinase family. Monomer. It depends on Mg(2+) as a cofactor.

Its subcellular location is the cytoplasm. It catalyses the reaction shikimate + ATP = 3-phosphoshikimate + ADP + H(+). It participates in metabolic intermediate biosynthesis; chorismate biosynthesis; chorismate from D-erythrose 4-phosphate and phosphoenolpyruvate: step 5/7. Functionally, catalyzes the specific phosphorylation of the 3-hydroxyl group of shikimic acid using ATP as a cosubstrate. This Microcystis aeruginosa (strain NIES-843 / IAM M-2473) protein is Shikimate kinase.